The following is a 2290-amino-acid chain: Protein Ycf2 (2290 aa).

Residues 505-530 are disordered; sequence GSNPTERSTRDQKSLKKQQDVSFVPP. Residues 511 to 523 show a composition bias toward basic and acidic residues; it reads RSTRDQKSLKKQQ. An ATP-binding site is contributed by 1639–1646; sequence GSIGTGRS.

Belongs to the Ycf2 family.

The protein localises to the plastid. The protein resides in the chloroplast stroma. In terms of biological role, probable ATPase of unknown function. Its presence in a non-photosynthetic plant (Epifagus virginiana) and experiments in tobacco indicate that it has an essential function which is probably not related to photosynthesis. In Ceratophyllum demersum (Rigid hornwort), this protein is Protein Ycf2.